We begin with the raw amino-acid sequence, 429 residues long: MQESLTLHPIKLINGTLNLPGSKSVSNRALLLAALSEGKTRLTNLLDSDDVRHMLTALTALGVEYHLSSDRTVCEIIGLGGAFAASQPLELFLGNAGTAMRPLAAALCLTDGDIVLTGEPRMKERPIGHLVDALRQGGAKIDYLEQENYPPLRLHGGFQGGEISVDGSVSSQFLTALLMTAPLAAQDTQISIQGDLVSKPYIDITLHMMKAFGIDVRHENYQRFFVAGRQQYRSPGDYLVEGDASSASYFLAAAAIKGGVVRVTGVGRNSVQGDIRFADVLEKMGAIVRWGEDYIECERGELHAIDMDMNHIPDAAMTIATAALFAQGGTTTLRNIYNWRVKETDRLAAMAIELRKVGAEVEEGNDYIRITPPAKLKAAEIGTYNDHRMAMCFSLVALSDTPVTILDPKCTAKTFPDYFEQLARLSELA.

3-phosphoshikimate contacts are provided by K23, S24, and R28. K23 is a binding site for phosphoenolpyruvate. The phosphoenolpyruvate site is built by G97 and R125. 3-phosphoshikimate is bound by residues S170, S171, Q172, S198, D314, N338, and K342. Q172 lines the phosphoenolpyruvate pocket. D314 functions as the Proton acceptor in the catalytic mechanism. Phosphoenolpyruvate is bound by residues R346, R388, and K413.

It belongs to the EPSP synthase family. In terms of assembly, monomer.

The protein resides in the cytoplasm. It catalyses the reaction 3-phosphoshikimate + phosphoenolpyruvate = 5-O-(1-carboxyvinyl)-3-phosphoshikimate + phosphate. It participates in metabolic intermediate biosynthesis; chorismate biosynthesis; chorismate from D-erythrose 4-phosphate and phosphoenolpyruvate: step 6/7. In terms of biological role, catalyzes the transfer of the enolpyruvyl moiety of phosphoenolpyruvate (PEP) to the 5-hydroxyl of shikimate-3-phosphate (S3P) to produce enolpyruvyl shikimate-3-phosphate and inorganic phosphate. The protein is 3-phosphoshikimate 1-carboxyvinyltransferase of Pectobacterium atrosepticum (strain SCRI 1043 / ATCC BAA-672) (Erwinia carotovora subsp. atroseptica).